Reading from the N-terminus, the 529-residue chain is uncharacterized protein (529 aa).

2 consecutive ABC transporter domains span residues L6–L257 and I287–L526. ATP-binding positions include G42 to S49 and G319 to S326.

It belongs to the ABC transporter superfamily.

This is an uncharacterized protein from Escherichia coli (strain K12).